We begin with the raw amino-acid sequence, 463 residues long: Hydrolase pyiE (463 aa).

Serine 252 serves as the catalytic Nucleophile. The tract at residues 350–373 (KSDGSRANGKKSHSPTDGGGVESD) is disordered.

Belongs to the AB hydrolase superfamily. FUS2 hydrolase family. Homodimer.

Its pathway is mycotoxin biosynthesis. In terms of biological role, hydrolyase; part of the gene cluster that mediates the biosynthesis of the mycotoxin pyrichalasin H, a tyrosine-derived cytochalasan that inhibits the growth of rice seedlings, but also inhibits lymphocyte capping and actin polymerization and alters cell morphology. Pyrichalasin H is indicated as the responsible agent for the genus-specific pathogenicity of M.grisea toward crabgrass. The first step in the pathway is catalyzed by the O-methyltransferase pyiA which methylates free tyrosine to generate the precursor O-methyltyrosine. The hybrid PKS-NRPS pyiS, assisted by the enoyl reductase pyiC, are responsible for fusion of the O-methyltyrosine precursor and the polyketide backbone. The polyketide synthase module (PKS) of pyiS is responsible for the synthesis of the polyketide backbone and the downstream nonribosomal peptide synthetase (NRPS) amidates the carboxyl end of the polyketide with the O-methyltyrosine precursor. As the NRPS A-domain demonstrates substrate tolerance, pyiS can also use phenylalanine, tyrosine and even para-chlorophenylalanine as amino acid precursor, which leads to the production of novel cytochalasans, including halogenated cytochalasans. Because pyiS lacks a designated enoylreductase (ER) domain, the required activity is provided the enoyl reductase pyiC. Reduction by the hydrolyase pyiE leads to 1,5-dihydropyrrolone, which is substrate for dehydration and intra-molecular Diels-Alder cyclization by the Diels-Alderase pyiF to yield the required isoindolone-fused macrocycle. The tailoring cytochrome P450 monooxygenases piyD and piyG catalyze the hydroxylation at C-18 and C-7, respectivily, whereas the short-chain dehydrogenase/reductase pyiH reduces the carbonyl at C-21 in preparation for the transfer of an acetyl group by the acetyltransferase pyiB. These 3 reactions whose order is not clear yet, lead to the production of O-methylpyrichalasin J, a deacetylated pyrichalasin H. Finally, pyiB to converts O-methylpyrichalasin J into the final product pyrichalasin H via acetylation of C-21. This chain is Hydrolase pyiE, found in Pyricularia grisea (Crabgrass-specific blast fungus).